The chain runs to 599 residues: DNA-directed RNA polymerase III subunit RPC3 (599 aa).

A disordered region spans residues 350–375 (PKKRSASNGDDERPTKKIKTEDSDDI). Residues 359–370 (DDERPTKKIKTE) are compositionally biased toward basic and acidic residues. The tract at residues 528–549 (LIFSMAEILSNIQAFREDHKIL) is leucine-zipper.

It belongs to the RNA polymerase beta chain family. As to quaternary structure, component of the RNA polymerase III (Pol III) complex consisting of 17 subunits.

It localises to the nucleus. Functionally, DNA-dependent RNA polymerase catalyzes the transcription of DNA into RNA using the four ribonucleoside triphosphates as substrates. Specific core component of RNA polymerase III which synthesizes small RNAs, such as 5S rRNA and tRNAs. This chain is DNA-directed RNA polymerase III subunit RPC3 (RPC82), found in Scheffersomyces stipitis (strain ATCC 58785 / CBS 6054 / NBRC 10063 / NRRL Y-11545) (Yeast).